We begin with the raw amino-acid sequence, 399 residues long: Bombesin receptor subtype-3 (399 aa).

The Extracellular portion of the chain corresponds to 1-41 (MSQKQPQSPNQTLISITNDTESSSSVVSNDTTNKGWTGDNS). N-linked (GlcNAc...) asparagine glycosylation is found at asparagine 10 and asparagine 18. A helical transmembrane segment spans residues 42–63 (PGIEALCAIYITYAVIISVGIL). Topologically, residues 64–82 (GNAILIKVFFKTKSMQTVP) are cytoplasmic. A helical transmembrane segment spans residues 83–103 (NIFITSLALGDLLLLLTCVPV). The Extracellular segment spans residues 104–121 (DATHYLAEGWLFGRIGCK). An intrachain disulfide couples cysteine 120 to cysteine 203. Residues 122-143 (VLSFIRLTSVGVSVFTLTILSA) form a helical membrane-spanning segment. Topologically, residues 144–163 (DRYKAVVKPLERQPSNAILK) are cytoplasmic. A helical transmembrane segment spans residues 164–184 (TCAKAGCIWIMSMIFALPEAI). Topologically, residues 185 to 220 (FSNVHTLRDPNKNMTSEWCAFYPVSEKLLQEIHALL) are extracellular. A helical membrane pass occupies residues 221-241 (SFLVFYIIPLSIISVYYSLIA). Topologically, residues 242–272 (RTLYKSTLNIPTEEQSHARKQVESRKRIAKT) are cytoplasmic. Residues 273 to 293 (VLVLVALFALCWLPNHLLNLY) traverse the membrane as a helical segment. Topologically, residues 294 to 313 (HSFTHKAYEDSSAIHFIVTI) are extracellular. The helical transmembrane segment at 314–333 (FSRVLAFSNSCVNPFALYWL) threads the bilayer. At 334 to 399 (SKTFQKQFKA…RPMKKEENRV (66 aa)) the chain is on the cytoplasmic side. Cysteine 347 carries the S-palmitoyl cysteine lipid modification.

The protein belongs to the G-protein coupled receptor 1 family. In terms of assembly, interacts with C6orf89. In terms of tissue distribution, mainly in uteri of pregnant animals.

It is found in the cell membrane. In terms of biological role, role in sperm cell division, maturation, or function. The relative order of ligand affinity is GRP = neuromedin-C &gt;&gt; neuromedin-B. This receptor mediates its action by association with G proteins that activate a phosphatidylinositol-calcium second messenger system. This is Bombesin receptor subtype-3 (BRS3) from Cavia porcellus (Guinea pig).